We begin with the raw amino-acid sequence, 505 residues long: Histidine--tRNA ligase, mitochondrial (505 aa).

Residues 1–31 constitute a mitochondrion transit peptide; that stretch reads MPHLGPLRRRAWAALLGQLLRPPSTVCTRGC. Ser66 carries the phosphoserine modification. L-histidine-binding positions include 130–132, Arg157, Gln173, Asp177, Arg326, and 330–331; these read DLT and YY. Lys443 carries the N6-acetyllysine modification.

The protein belongs to the class-II aminoacyl-tRNA synthetase family. Homodimer.

The protein resides in the mitochondrion. The catalysed reaction is tRNA(His) + L-histidine + ATP = L-histidyl-tRNA(His) + AMP + diphosphate + H(+). Functionally, mitochondrial aminoacyl-tRNA synthetase that catalyzes the ATP-dependent ligation of histidine to the 3'-end of its cognate tRNA, via the formation of an aminoacyl-adenylate intermediate (His-AMP). The polypeptide is Histidine--tRNA ligase, mitochondrial (Hars2) (Mus musculus (Mouse)).